The primary structure comprises 258 residues: tRNA pseudouridine synthase A (258 aa).

The Nucleophile role is filled by Asp-52. Substrate is bound at residue Tyr-110.

It belongs to the tRNA pseudouridine synthase TruA family. In terms of assembly, homodimer.

The catalysed reaction is uridine(38/39/40) in tRNA = pseudouridine(38/39/40) in tRNA. In terms of biological role, formation of pseudouridine at positions 38, 39 and 40 in the anticodon stem and loop of transfer RNAs. This chain is tRNA pseudouridine synthase A, found in Francisella tularensis subsp. holarctica (strain LVS).